Here is a 329-residue protein sequence, read N- to C-terminus: Malate dehydrogenase (329 aa).

Residue 12-18 participates in NAD(+) binding; it reads GAAGQIG. Substrate contacts are provided by R95 and R101. Residues N108, Q115, and 132 to 134 contribute to the NAD(+) site; that span reads VGN. Residues N134 and R165 each coordinate substrate. H190 functions as the Proton acceptor in the catalytic mechanism.

Belongs to the LDH/MDH superfamily. MDH type 2 family. As to quaternary structure, homodimer.

The enzyme catalyses (S)-malate + NAD(+) = oxaloacetate + NADH + H(+). With respect to regulation, substrate inhibition is observed at high concentrations of oxaloacetate. Functionally, catalyzes the reversible oxidation of malate to oxaloacetate. Catalyzes the reduction of oxaloacetate more efficiently than the oxidation of malate. The polypeptide is Malate dehydrogenase (Syntrophobacter fumaroxidans (strain DSM 10017 / MPOB)).